Here is a 66-residue protein sequence, read N- to C-terminus: Small ribosomal subunit protein bS21 (66 aa).

This sequence belongs to the bacterial ribosomal protein bS21 family.

The chain is Small ribosomal subunit protein bS21 from Rickettsia africae (strain ESF-5).